A 215-amino-acid chain; its full sequence is uncharacterized protein (215 aa).

A run of 6 helical transmembrane segments spans residues 21-40 (IIKY…VLIN), 50-69 (LIFS…TIIF), 95-117 (FVAI…YVFF), 122-144 (LEIA…LVVL), 157-179 (NFVG…LILQ), and 185-207 (LIFI…SAYL).

Belongs to the CcmB/CycW/HelB family.

Its subcellular location is the cell membrane. This is an uncharacterized protein from Rickettsia prowazekii (strain Madrid E).